Reading from the N-terminus, the 161-residue chain is Bifurcating [FeFe] hydrogenase gamma subunit (161 aa).

[2Fe-2S] cluster-binding residues include cysteine 78, cysteine 83, cysteine 119, and cysteine 123.

The protein belongs to the complex I 24 kDa subunit family. In terms of assembly, heterotrimer composed of HydA (alpha subunit), HydB (beta subunit) and HydC (gamma subunit). Near neutral and acidic pH conditions favor oligomerization of the heterotrimeric holoenzyme. [2Fe-2S] cluster is required as a cofactor.

It is found in the cytoplasm. It catalyses the reaction 2 H2 + 2 oxidized [2Fe-2S]-[ferredoxin] + NAD(+) = 2 reduced [2Fe-2S]-[ferredoxin] + NADH + 3 H(+). Catalyzes the oxidation of the physiological electron carriers NADH and reduced ferredoxin, coupled to the production of H(2). Acts as a bifurcating [FeFe] hydrogenase, which uses the exergonic oxidation of reduced ferredoxin to drive the unfavorable oxidation of NADH to produce H(2). The gamma subunit might be the site where reduced ferredoxin is oxidized. The polypeptide is Bifurcating [FeFe] hydrogenase gamma subunit (Thermotoga maritima (strain ATCC 43589 / DSM 3109 / JCM 10099 / NBRC 100826 / MSB8)).